The sequence spans 221 residues: Uracil-DNA glycosylase (221 aa).

D65 (proton acceptor) is an active-site residue.

Belongs to the uracil-DNA glycosylase (UDG) superfamily. UNG family.

Its subcellular location is the cytoplasm. The enzyme catalyses Hydrolyzes single-stranded DNA or mismatched double-stranded DNA and polynucleotides, releasing free uracil.. Its function is as follows. Excises uracil residues from the DNA which can arise as a result of misincorporation of dUMP residues by DNA polymerase or due to deamination of cytosine. In Christiangramia forsetii (strain DSM 17595 / CGMCC 1.15422 / KT0803) (Gramella forsetii), this protein is Uracil-DNA glycosylase.